Here is a 546-residue protein sequence, read N- to C-terminus: Mitochondrial distribution and morphology protein 34 (546 aa).

Positions 1–195 (MAFNFNWSPL…LPAIIHRLSL (195 aa)) constitute an SMP-LTD domain. Disordered stretches follow at residues 208-230 (EVKA…QDPV), 299-319 (SHGG…SHVA), 344-382 (TMGA…CTDS), 395-416 (SSSA…SPDA), and 517-546 (RRIQ…AYGQ). Basic residues predominate over residues 349–362 (RHPRTRPSRKHKRR). Positions 363-374 (VVDLRKPQKLDD) are enriched in basic and acidic residues.

It belongs to the MDM34 family. Component of the ER-mitochondria encounter structure (ERMES) or MDM complex, composed of MMM1, MDM10, MDM12 and MDM34.

The protein resides in the mitochondrion outer membrane. In terms of biological role, component of the ERMES/MDM complex, which serves as a molecular tether to connect the endoplasmic reticulum (ER) and mitochondria. Components of this complex are involved in the control of mitochondrial shape and protein biogenesis, and function in nonvesicular lipid trafficking between the ER and mitochondria. MDM34 is required for the interaction of the ER-resident membrane protein MMM1 and the outer mitochondrial membrane-resident beta-barrel protein MDM10. In Arthroderma otae (strain ATCC MYA-4605 / CBS 113480) (Microsporum canis), this protein is Mitochondrial distribution and morphology protein 34.